Here is a 471-residue protein sequence, read N- to C-terminus: Ubiquitin-conjugating enzyme E2 variant 3 (471 aa).

Residues glutamate 2–serine 145 form the UEV domain. Glycine 191–threonine 219 lines the NAD(+) pocket.

The protein in the N-terminal section; belongs to the ubiquitin-conjugating enzyme family. UEV subfamily. It in the C-terminal section; belongs to the LDH/MDH superfamily. In terms of assembly, homodimer. As to expression, colon, colon carcinoma cell lines, normal cervical epithelium, carcinomas of the uterine cervix and peripheral blood leukocytes.

In terms of biological role, possible negative regulator of polyubiquitination. The polypeptide is Ubiquitin-conjugating enzyme E2 variant 3 (Homo sapiens (Human)).